Reading from the N-terminus, the 389-residue chain is uncharacterized protein (389 aa).

Positions 1 to 12 (MVHATSQSASTE) are enriched in polar residues. Disordered stretches follow at residues 1–49 (MVHA…DEDL) and 86–111 (HKSM…ANRA). The span at 40-49 (ESGDEYDEDL) shows a compositional bias: acidic residues. Residues 93–110 (RGKKKRGKTAKKAKKANR) show a composition bias toward basic residues.

This is an uncharacterized protein from Caenorhabditis elegans.